The following is a 142-amino-acid chain: Hemoglobin subunit alpha (142 aa).

Positions 1-142 constitute a Globin domain; sequence VLSAADKNNV…VSTVLTSKYR (142 aa). Position 3 is a phosphoserine (Ser3). Lys7 and Lys11 each carry N6-succinyllysine. N6-acetyllysine; alternate is present on Lys16. N6-succinyllysine; alternate is present on Lys16. Tyr24 bears the Phosphotyrosine mark. Ser35 carries the post-translational modification Phosphoserine. Lys40 is modified (N6-succinyllysine). An O2-binding site is contributed by His58. His87 serves as a coordination point for heme b. At Ser102 the chain carries Phosphoserine. Thr108 carries the phosphothreonine modification. Ser125 carries the phosphoserine modification. Phosphothreonine is present on residues Thr135 and Thr138. Position 139 is a phosphoserine (Ser139).

The protein belongs to the globin family. In terms of assembly, heterotetramer of two alpha chains and two beta chains. Red blood cells.

In terms of biological role, involved in oxygen transport from the lung to the various peripheral tissues. Its function is as follows. Hemopressin acts as an antagonist peptide of the cannabinoid receptor CNR1. Hemopressin-binding efficiently blocks cannabinoid receptor CNR1 and subsequent signaling. This is Hemoglobin subunit alpha (HBA) from Procavia capensis habessinica (Abyssinian hyrax).